The primary structure comprises 330 residues: Ketol-acid reductoisomerase (NADP(+)) (330 aa).

The KARI N-terminal Rossmann domain occupies 3 to 184 (LPVYYDKDID…GGGRMGVLET (182 aa)). Residues 26-29 (YGVQ), Ser52, and Ser54 each bind NADP(+). Residue His109 is part of the active site. Gly135 lines the NADP(+) pocket. Positions 185–329 (SFKEECESDL…EILRAPFNHK (145 aa)) constitute a KARI C-terminal knotted domain. Asp193, Glu197, Glu229, and Glu233 together coordinate Mg(2+). Position 254 (Ser254) interacts with substrate.

Belongs to the ketol-acid reductoisomerase family. Mg(2+) serves as cofactor.

The enzyme catalyses (2R)-2,3-dihydroxy-3-methylbutanoate + NADP(+) = (2S)-2-acetolactate + NADPH + H(+). The catalysed reaction is (2R,3R)-2,3-dihydroxy-3-methylpentanoate + NADP(+) = (S)-2-ethyl-2-hydroxy-3-oxobutanoate + NADPH + H(+). The protein operates within amino-acid biosynthesis; L-isoleucine biosynthesis; L-isoleucine from 2-oxobutanoate: step 2/4. It functions in the pathway amino-acid biosynthesis; L-valine biosynthesis; L-valine from pyruvate: step 2/4. Functionally, involved in the biosynthesis of branched-chain amino acids (BCAA). Catalyzes an alkyl-migration followed by a ketol-acid reduction of (S)-2-acetolactate (S2AL) to yield (R)-2,3-dihydroxy-isovalerate. In the isomerase reaction, S2AL is rearranged via a Mg-dependent methyl migration to produce 3-hydroxy-3-methyl-2-ketobutyrate (HMKB). In the reductase reaction, this 2-ketoacid undergoes a metal-dependent reduction by NADPH to yield (R)-2,3-dihydroxy-isovalerate. The chain is Ketol-acid reductoisomerase (NADP(+)) from Helicobacter pylori (strain J99 / ATCC 700824) (Campylobacter pylori J99).